The sequence spans 153 residues: Calmodulin-like protein 4 (153 aa).

EF-hand domains follow at residues 8 to 43 (DQIN…LGAS), 44 to 79 (PTPG…QIKQ), 81 to 116 (DPKK…LGEK), and 117 to 152 (LTHK…PVRD).

The protein belongs to the calmodulin family. As to quaternary structure, interacts with MYO7B; the interaction mediates the association of CALML4 with the IMAC/intermicrovillar adhesion complex. Interacts with MYO7A.

It is found in the cell projection. The protein localises to the microvillus. As part of the intermicrovillar adhesion complex/IMAC plays a role in epithelial brush border differentiation, controlling microvilli organization and length. Acts as a light chain for MYO7B and is required for efficient targeting of the IMAC to the tips of border brush microvilli. This is Calmodulin-like protein 4 (CALML4) from Bos taurus (Bovine).